A 581-amino-acid chain; its full sequence is Proline--tRNA ligase (581 aa).

Belongs to the class-II aminoacyl-tRNA synthetase family. ProS type 1 subfamily. In terms of assembly, homodimer.

It localises to the cytoplasm. It catalyses the reaction tRNA(Pro) + L-proline + ATP = L-prolyl-tRNA(Pro) + AMP + diphosphate. In terms of biological role, catalyzes the attachment of proline to tRNA(Pro) in a two-step reaction: proline is first activated by ATP to form Pro-AMP and then transferred to the acceptor end of tRNA(Pro). As ProRS can inadvertently accommodate and process non-cognate amino acids such as alanine and cysteine, to avoid such errors it has two additional distinct editing activities against alanine. One activity is designated as 'pretransfer' editing and involves the tRNA(Pro)-independent hydrolysis of activated Ala-AMP. The other activity is designated 'posttransfer' editing and involves deacylation of mischarged Ala-tRNA(Pro). The misacylated Cys-tRNA(Pro) is not edited by ProRS. The chain is Proline--tRNA ligase from Chlamydia trachomatis serovar A (strain ATCC VR-571B / DSM 19440 / HAR-13).